We begin with the raw amino-acid sequence, 71 residues long: MEKKKESFENMLEKLETIVDSMDNGEITLEDSMKSYEEGIKLCNKLYKVLKDAEGKIKILENNKEEDFENS.

This sequence belongs to the XseB family. Heterooligomer composed of large and small subunits.

Its subcellular location is the cytoplasm. It catalyses the reaction Exonucleolytic cleavage in either 5'- to 3'- or 3'- to 5'-direction to yield nucleoside 5'-phosphates.. In terms of biological role, bidirectionally degrades single-stranded DNA into large acid-insoluble oligonucleotides, which are then degraded further into small acid-soluble oligonucleotides. In Clostridium botulinum (strain ATCC 19397 / Type A), this protein is Exodeoxyribonuclease 7 small subunit.